A 1021-amino-acid polypeptide reads, in one-letter code: Replication factor C subunit 1 (1021 aa).

2 disordered regions span residues 1–259 and 339–392; these read MSSD…EGAP and PAKA…GSAS. Over residues 90–110 the composition is skewed to basic and acidic residues; the sequence is KVSDELEDDMKPLPAKEVHKE. The span at 123-138 shows a compositional bias: basic residues; it reads SKRKTPVKPPPSKKLK. Residues 197–207 show a composition bias toward acidic residues; the sequence is LDDDGEEDKMD. The span at 219–236 shows a compositional bias: gly residues; sequence RGRGGASGGRGRGGGGRG. Composition is skewed to basic and acidic residues over residues 241–255 and 347–357; these read GERKDPPHKGEKEVP and HQSDKNSEKQQ. A BRCT domain is found at 257 to 347; the sequence is GAPDCLTGLT…KPAKATVAKH (91 aa). Over residues 374-392 the composition is skewed to polar residues; it reads NQITTGKNISPKSNKGSAS. 465–472 contributes to the ATP binding site; the sequence is SGPPGIGK. The disordered stretch occupies residues 931–1021; that stretch reads VGESLPEENG…AGGSGGKRKR (91 aa). Over residues 945–958 the composition is skewed to acidic residues; that stretch reads EGDEEDSSDAENND. Positions 965 to 977 are enriched in basic and acidic residues; that stretch reads TKPKLDLQSDKKK. Low complexity predominate over residues 999-1010; sequence AGRSKASGSAGK. A compositionally biased stretch (gly residues) spans 1011–1021; that stretch reads AAGGSGGKRKR.

Belongs to the activator 1 large subunit family. Heterotetramer of subunits RFC2, RFC3, RFC4 and RFC5 that can form a complex with RFC1. In terms of tissue distribution, expressed in roots, leaves, shoot apical meristem (SAM), flag leaves and panicles.

Its subcellular location is the nucleus. Its function is as follows. May be involved in DNA replication and thus regulate cell proliferation. This Oryza sativa subsp. japonica (Rice) protein is Replication factor C subunit 1 (RFC1).